The sequence spans 187 residues: MATGPRYKVPMRRRREARTDYHQRLRLLKSGKPRLVARKSNKHVRAQLVTLGPNGDDTLASAHSSDLAEYGWEAPTGNMPSAYLTGLLAGLRAQEAGVEEAVLDIGLNSPTPGSKVFAIQEGAIDAGLDIPHNDDVLADWQRTRGAHIAEYDEQLEEPLYSGDFDAADLPEHFDELRETLLDGDIEL.

The protein belongs to the universal ribosomal protein uL18 family. Part of the 50S ribosomal subunit. Interacts with proteins L5 and L21e, and attaches the 5S rRNA to the 23S rRNA. Has been cross-linked to L21e.

This is one of 5 proteins that mediate the attachment of the 5S rRNA onto the large ribosomal subunit, where it forms part of the central protuberance and stabilizes the orientation of adjacent RNA domains. This chain is Large ribosomal subunit protein uL18 (rpl18), found in Haloarcula marismortui (strain ATCC 43049 / DSM 3752 / JCM 8966 / VKM B-1809) (Halobacterium marismortui).